A 337-amino-acid chain; its full sequence is Phosphate acyltransferase (337 aa).

The protein belongs to the PlsX family. As to quaternary structure, homodimer. Probably interacts with PlsY.

The protein localises to the cytoplasm. The catalysed reaction is a fatty acyl-[ACP] + phosphate = an acyl phosphate + holo-[ACP]. It functions in the pathway lipid metabolism; phospholipid metabolism. Its function is as follows. Catalyzes the reversible formation of acyl-phosphate (acyl-PO(4)) from acyl-[acyl-carrier-protein] (acyl-ACP). This enzyme utilizes acyl-ACP as fatty acyl donor, but not acyl-CoA. In Ehrlichia chaffeensis (strain ATCC CRL-10679 / Arkansas), this protein is Phosphate acyltransferase.